The chain runs to 123 residues: Thioredoxin domain-containing protein 17 (123 aa).

A Thioredoxin domain is found at 41 to 123 (SWCPDCVTAE…DLVRMMFTED (83 aa)). Residues cysteine 43 and cysteine 46 each act as nucleophile in the active site. Cysteines 43 and 46 form a disulfide.

Belongs to the thioredoxin family. As to expression, predominantly expressed in liver, brain and muscle. Also expressed in kidney, intestine, skin, stomach, gill and head kidney.

It is found in the cytoplasm. Its function is as follows. Disulfide reductase. May participate in various redox reactions through the reversible oxidation of its active center dithiol to a disulfide and catalyze dithiol-disulfide exchange reactions. Has peroxidase activity and may contribute to the elimination of cellular hydrogen peroxide. May function as an antioxidant involved in response to viral infection. This chain is Thioredoxin domain-containing protein 17, found in Epinephelus coioides (Orange-spotted grouper).